Here is a 325-residue protein sequence, read N- to C-terminus: Glutarate 2-hydroxylase (325 aa).

Fe cation is bound by residues His160, Asp162, and His292.

This sequence belongs to the glutarate hydroxylase family. In terms of assembly, homotetramer. Requires Fe(2+) as cofactor.

The catalysed reaction is glutarate + 2-oxoglutarate + O2 = (S)-2-hydroxyglutarate + succinate + CO2. The protein operates within amino-acid degradation. Acts as an alpha-ketoglutarate-dependent dioxygenase catalyzing hydroxylation of glutarate (GA) to L-2-hydroxyglutarate (L2HG). Functions in a L-lysine degradation pathway that proceeds via cadaverine, glutarate and L-2-hydroxyglutarate. This Escherichia fergusonii (strain ATCC 35469 / DSM 13698 / CCUG 18766 / IAM 14443 / JCM 21226 / LMG 7866 / NBRC 102419 / NCTC 12128 / CDC 0568-73) protein is Glutarate 2-hydroxylase.